We begin with the raw amino-acid sequence, 198 residues long: Septum-promoting GTP-binding protein 1 (198 aa).

Residues 6–198 (KNNVTIKVGM…GDPILEYIDR (193 aa)) form a small GTPase-like region. GTP contacts are provided by residues 17–24 (GDSSIGKT), 65–69 (DLGGQ), and 122–125 (TKYD).

As to quaternary structure, interacts with cdc7 and cdc11.

GTP-binding protein essential for the induction of septum formation at G2 and pre-START stages of mitosis. Acts via the cdc7 protein kinase pathway. In Schizosaccharomyces pombe (strain 972 / ATCC 24843) (Fission yeast), this protein is Septum-promoting GTP-binding protein 1 (spg1).